The sequence spans 116 residues: MADEVKAVARFIRMSPFKVRRILDQIRGRSYQDALIILQFMPHAATEPIKKVLESAAANAEHNFSLDRRALVVSTAFADGGPVLKRFRAGDRGRARPVRKRTSHITVAVRSTSEVE.

Belongs to the universal ribosomal protein uL22 family. In terms of assembly, part of the 50S ribosomal subunit.

In terms of biological role, this protein binds specifically to 23S rRNA; its binding is stimulated by other ribosomal proteins, e.g. L4, L17, and L20. It is important during the early stages of 50S assembly. It makes multiple contacts with different domains of the 23S rRNA in the assembled 50S subunit and ribosome. Functionally, the globular domain of the protein is located near the polypeptide exit tunnel on the outside of the subunit, while an extended beta-hairpin is found that lines the wall of the exit tunnel in the center of the 70S ribosome. In Gloeobacter violaceus (strain ATCC 29082 / PCC 7421), this protein is Large ribosomal subunit protein uL22.